We begin with the raw amino-acid sequence, 326 residues long: MKNIAIIGASGYTGAQLTALIHAEAELTIQGLYVSENSLDKGKPLADLYPSYSHIALTLSPLSDDAKAKIVAEADAVVLATEHSVSLHLAAWFYSQGLAVFDLSGAYRFSDVAQYPKWYGFEHEYPEVLAKAVYGLAEWNAKEIAATKMIAVPGCYPTASLTALKPLASLLTSAYPVINAVSGVTGAGRKAQLQTSFCEVSLTPYGVLGHRHQPEIATQLGQEVIFTPHLGNFKRGILATITVQLKPGTTTADVAAAYSVYDQAPLVTVKHNHFPKVDDVVLTPNCHLGWKFDENSGYLVVASAIDNLMKGAASQALQCIKIHFNL.

Residue cysteine 155 is part of the active site.

Belongs to the NAGSA dehydrogenase family. Type 1 subfamily.

It is found in the cytoplasm. It catalyses the reaction N-acetyl-L-glutamate 5-semialdehyde + phosphate + NADP(+) = N-acetyl-L-glutamyl 5-phosphate + NADPH + H(+). It functions in the pathway amino-acid biosynthesis; L-arginine biosynthesis; N(2)-acetyl-L-ornithine from L-glutamate: step 3/4. In terms of biological role, catalyzes the NADPH-dependent reduction of N-acetyl-5-glutamyl phosphate to yield N-acetyl-L-glutamate 5-semialdehyde. The protein is N-acetyl-gamma-glutamyl-phosphate reductase of Shewanella baltica (strain OS185).